A 330-amino-acid polypeptide reads, in one-letter code: Lactamase-like protein nscB (330 aa).

Positions 97, 99, 101, and 102 each coordinate Zn(2+). Asp-101 (proton donor/acceptor) is an active-site residue.

This sequence belongs to the metallo-beta-lactamase superfamily. It depends on Zn(2+) as a cofactor.

It participates in secondary metabolite biosynthesis. Lactamase-like protein; part of the gene cluster that mediates the biosynthesis of neosartoricin, a prenylated anthracenone that exhibits T-cell antiproliferative activity, suggestive of a physiological role as an immunosuppressive agent. The non-reducing polyketide synthase nscA probably synthesizes and cyclizes the decaketide backbone. The hydrolase nscB then mediates the product release through hydrolysis followed by spontaneous decarboxylation. The prenyltransferase nscD catalyzes the addition of the dimethylallyl group to the aromatic C5. The FAD-dependent monooxygenase nscC is then responsible for the stereospecific hydroxylation at C2. There is no gene encoding O-acetyltransferase in the nsc gene cluster; thus, the last step of 2-O-acetylation leading to neosartoricin may be catalyzed by an unidentified O-acetyltransferase. The chain is Lactamase-like protein nscB from Aspergillus fumigatus (strain ATCC MYA-4609 / CBS 101355 / FGSC A1100 / Af293) (Neosartorya fumigata).